The primary structure comprises 308 residues: Protein translocase subunit SecF (308 aa).

6 helical membrane passes run 23–42 (VSYS…IGIY), 140–160 (IEAG…YIGV), 164–184 (WYFG…ALGF), 194–214 (LSTI…SVVI), 246–266 (ILTV…GGKA), and 272–292 (VLVF…SAPI).

This sequence belongs to the SecD/SecF family. SecF subfamily. In terms of assembly, forms a complex with SecD. Part of the essential Sec protein translocation apparatus which comprises SecA, SecYEG and auxiliary proteins SecDF-YajC and YidC.

The protein resides in the cell inner membrane. In terms of biological role, part of the Sec protein translocase complex. Interacts with the SecYEG preprotein conducting channel. SecDF uses the proton motive force (PMF) to complete protein translocation after the ATP-dependent function of SecA. The chain is Protein translocase subunit SecF from Rickettsia typhi (strain ATCC VR-144 / Wilmington).